A 468-amino-acid polypeptide reads, in one-letter code: Hepatocyte nuclear factor 3-alpha (468 aa).

The fork-head DNA-binding region spans 169–260 (AKPPYSYISL…GNMFENGCYL (92 aa)). Positions 251–288 (GNMFENGCYLRRQKRFKCEKQPGAGGGSGGGGSKGGPE) are essential for DNA binding. Positions 269-396 (EKQPGAGGGS…DPHYSFNHPF (128 aa)) are disordered. Gly residues predominate over residues 273 to 285 (GAGGGSGGGGSKG). Phosphoserine is present on residues Ser303 and Ser327. Low complexity-rich tracts occupy residues 318–328 (GAPAPGPAASP) and 347–365 (SPAS…ALAS).

As to quaternary structure, binds DNA as a monomer. Interacts with FOXA2. Interacts with NKX2-1. Interacts with HDAC7. Interacts with the histone H3-H4 heterodimer. Associates with nucleosomes containing histone H2A. Interacts with AR. Interacts with NR0B2. As to expression, restricted mainly to endoderm-derived tissues (lung, liver, stomach, and small intestine). Expressed in the prostate.

The protein resides in the nucleus. Functionally, transcription factor that is involved in embryonic development, establishment of tissue-specific gene expression and regulation of gene expression in differentiated tissues. Is thought to act as a 'pioneer' factor opening the compacted chromatin for other proteins through interactions with nucleosomal core histones and thereby replacing linker histones at target enhancer and/or promoter sites. Binds DNA with the consensus sequence 5'-[AC]A[AT]T[AG]TT[GT][AG][CT]T[CT]-3'. Proposed to play a role in translating the epigenetic signatures into cell type-specific enhancer-driven transcriptional programs. Involved in the development of multiple endoderm-derived organ systems such as the liver, pancreas, lungs and prostate; FOXA1 and FOXA2 seem to have at least in part redundant roles. Plays a role in prostate morphogenesis and epithelial cell differentiation. FOXA1 and FOXA2 are essential for hepatic specification. FOXA1 and FOXA2 are required for morphogenesis and cell differentiation during formation of the lung. FOXA1 and FOXA2 are involved in bile duct formation; they positively regulate the binding of glucocorticoid receptor/NR3C1 to the IL6 promoter. FOXA1 and FOXA2 regulate multiple phases of midbrain dopaminergic neuron development; they regulate expression of NEUROG2 at the beginning of mDA neurogenesis and of NR4A2 and EN1 in immature mDA neurons. Modulates the transcriptional activity of nuclear hormone receptors. Is involved in ESR1-mediated transcription. Inhibits NKX2-1-mediated transcription from the SFTPC promoter in lung epithel independently from DNA-binding. Involved in regulation of apoptosis. Involved in cell cycle regulation. Originally described as a transcription activator for a number of liver genes such as AFP, albumin, tyrosine aminotransferase, PEPCK, etc. Interacts with the cis-acting regulatory regions of these genes. Involved in glucose homeostasis; activates the GCG promoter. This is Hepatocyte nuclear factor 3-alpha (Foxa1) from Mus musculus (Mouse).